We begin with the raw amino-acid sequence, 120 residues long: DLQTTGADHSATVNPDQQLIMTKHSATVTPENKCVFPFNYRGYRYYDCTRTDSFYRWCSLTGTYSGSWKYCAATDYAKCAFPFVYRGQTYDRCTTDGSLFRISWCSVTPNYDHHGAWKYC.

2 tandem repeats follow at residues 1–13 and 16–28. Positions 1-28 are 2 X approximate repeats; that stretch reads DLQTTGADHSATVNPDQQLIMTKHSATV. O-linked (GalNAc...) threonine glycans are attached at residues T5, T12, T22, and T27. 2 consecutive Fibronectin type-II domains span residues 29–73 and 74–120; these read TPEN…YCAA and TDYA…WKYC. 4 disulfides stabilise this stretch: C34-C58, C48-C71, C79-C105, and C93-C120.

This sequence belongs to the seminal plasma protein family. As to quaternary structure, one glycoform exists as a monomer while the other forms a heterotetramer with HSP-2 and binds heparin. In terms of processing, O-glycosylated on Thr. There are two forms of HSP-1 which probably differ in the amount of sialylation of polysaccharide. Major component of seminal plasma.

It is found in the secreted. Could enhance the fertilizing capacity of spermatozoa upon interaction with heparin-like glycosaminoglycans present in the female genital tract. This is Seminal plasma protein HSP-1 from Equus caballus (Horse).